The chain runs to 193 residues: Large ribosomal subunit protein uL18 (193 aa).

Belongs to the universal ribosomal protein uL18 family. As to quaternary structure, part of the 50S ribosomal subunit. Contacts the 5S and 23S rRNAs.

This is one of the proteins that bind and probably mediate the attachment of the 5S RNA into the large ribosomal subunit, where it forms part of the central protuberance. This is Large ribosomal subunit protein uL18 from Methanococcus vannielii (strain ATCC 35089 / DSM 1224 / JCM 13029 / OCM 148 / SB).